A 226-amino-acid chain; its full sequence is Adenylate kinase (226 aa).

Residue 11–16 coordinates ATP; the sequence is GSGKGT. The interval 31 to 64 is NMP; sequence SAGEILKHALSVTKFHFNFNTDNMLNQINSGNLV. Residues 62-64, 90-93, and Q97 each bind AMP; these read NLV and GFPR. The LID stretch occupies residues 127–164; that stretch reads GRQVHIKSGRTYHIKFNPPKLDGIDDITGEKLVIRADD. ATP is bound by residues R128 and 137-138; that span reads TY. AMP contacts are provided by R161 and R172. Q205 lines the ATP pocket.

Belongs to the adenylate kinase family. In terms of assembly, monomer.

The protein localises to the cytoplasm. It carries out the reaction AMP + ATP = 2 ADP. It participates in purine metabolism; AMP biosynthesis via salvage pathway; AMP from ADP: step 1/1. Its function is as follows. Catalyzes the reversible transfer of the terminal phosphate group between ATP and AMP. Plays an important role in cellular energy homeostasis and in adenine nucleotide metabolism. The sequence is that of Adenylate kinase from Blochmanniella floridana.